We begin with the raw amino-acid sequence, 432 residues long: 2-oxoglutarate-dependent dioxygenase AOP2 (432 aa).

The region spanning 281–378 (SGDDVEANDD…RYTAAIFTCP (98 aa)) is the Fe2OG dioxygenase domain. Fe cation contacts are provided by H301, D303, and H358. Residue R369 coordinates 2-oxoglutarate.

This sequence belongs to the iron/ascorbate-dependent oxidoreductase family. It depends on Fe(2+) as a cofactor.

In terms of biological role, 2-oxoglutarate-dependent dioxygenase involved in glucosinolates biosynthesis. Catalyzes the conversion of methylsulfinylalkyl glucosinolates to alkenyl glucosinolates. The polypeptide is 2-oxoglutarate-dependent dioxygenase AOP2 (AOP2) (Arabidopsis thaliana (Mouse-ear cress)).